A 234-amino-acid polypeptide reads, in one-letter code: (5-formylfuran-3-yl)methyl phosphate synthase (234 aa).

The active-site Schiff-base intermediate with substrate is the Lys-27. Lys-85 functions as the Proton acceptor in the catalytic mechanism.

It belongs to the MfnB family.

It catalyses the reaction 2 D-glyceraldehyde 3-phosphate = 4-(hydroxymethyl)-2-furancarboxaldehyde phosphate + phosphate + 2 H2O. It functions in the pathway cofactor biosynthesis; methanofuran biosynthesis. Its function is as follows. Catalyzes the formation of 4-(hydroxymethyl)-2-furancarboxaldehyde phosphate (4-HFC-P) from two molecules of glyceraldehyde-3-P (GA-3-P). In Methanosarcina barkeri (strain Fusaro / DSM 804), this protein is (5-formylfuran-3-yl)methyl phosphate synthase.